The chain runs to 167 residues: Gametocyte-specific factor 1 homolog (167 aa).

CHHC U11-48K-type zinc fingers lie at residues 1–28 and 34–61; these read MVYCPYNKEHKMLRKKLQQHILKCRVIY and LMVCPFNSSHLIPEPQFFQHTQSCEDRN. Positions 4, 10, 20, 24, 37, 43, 53, and 57 each coordinate Zn(2+). Basic and acidic residues predominate over residues 128 to 161; that stretch reads EKRRHFGEDYEEEKKPRKAKARADLRPTPYEHRR. Positions 128–167 are disordered; that stretch reads EKRRHFGEDYEEEKKPRKAKARADLRPTPYEHRRPYSRRQ.

This sequence belongs to the UPF0224 (FAM112) family. As to quaternary structure, interacts with piwi.

It localises to the nucleus. Functionally, acts via the piwi-interacting RNA (piRNA) pathway which mediates the repression of transposable elements during meiosis by forming complexes composed of piRNAs and piwi proteins and governs the methylation and subsequent repression of transposons. Required for repression of transposons and neighboring genes in ovarian somatic and germline cells. This is Gametocyte-specific factor 1 homolog from Drosophila melanogaster (Fruit fly).